Reading from the N-terminus, the 632-residue chain is Myrcene synthase TPS3FN, chloroplastic (632 aa).

A chloroplast-targeting transit peptide spans 1 to 55; sequence MHCMAVHQFSPSIVSSLPTISTYNNNHFCRFFTPKTSISPISKTKSKSSTCYPIQ. Residues arginine 343, aspartate 380, aspartate 384, arginine 524, and aspartate 527 each contribute to the (2E)-geranyl diphosphate site. Residues aspartate 380 and aspartate 384 each coordinate Mg(2+). A DDXXD motif motif is present at residues 380 to 384; sequence DDIYD. Mg(2+)-binding residues include aspartate 527, threonine 531, and glutamate 535.

This sequence belongs to the terpene synthase family. Tpsb subfamily. Mg(2+) is required as a cofactor. It depends on Mn(2+) as a cofactor. In terms of tissue distribution, expressed in glandular trichomes two to four weeks after flowering onset.

The protein localises to the plastid. It is found in the chloroplast. The enzyme catalyses (2E)-geranyl diphosphate = beta-myrcene + diphosphate. It participates in secondary metabolite biosynthesis; terpenoid biosynthesis. Functionally, involved in monoterpene (C10) olefins biosynthesis, constituants of cannabinoids and terpenoids-rich resins. Catalyzes strictly the conversion of (2E)-geranyl diphosphate to beta-myrcene. The sequence is that of Myrcene synthase TPS3FN, chloroplastic from Cannabis sativa (Hemp).